A 285-amino-acid polypeptide reads, in one-letter code: uncharacterized protein (285 aa).

6 consecutive transmembrane segments (helical) span residues 7–29, 49–71, 95–117, 137–156, 232–254, and 259–281; these read FYRL…LTLQ, LVVW…STFF, IFLY…SNTL, FFSE…VLHA, KVVN…TVAL, and GGLS…IFVV.

Its subcellular location is the cell membrane. This is an uncharacterized protein from Aquifex aeolicus (strain VF5).